The chain runs to 436 residues: Two-pore potassium channel 3 (436 aa).

At 1–148 (MANEGSDPLL…QKDPTETSRS (148 aa)) the chain is on the cytoplasmic side. The segment at 62–117 (SHFIDSMKQPSPSSSSTAVNNPFSDSSTLDPLLPPPPPQPEPWLSDQTSSHCQGHA) is disordered. The segment covering 71–92 (PSPSSSSTAVNNPFSDSSTLDP) has biased composition (low complexity). The segment covering 93–102 (LLPPPPPQPE) has biased composition (pro residues). The helical transmembrane segment at 149 to 169 (VVRQAFALLVVYLSLGVLIYW) threads the bilayer. The pore-forming intramembrane region spans 185-204 (DGLYFCIVTMCTIGYGDITP). Residues 212-232 (FSIMFVLVGFGFIDILLSGMV) traverse the membrane as a helical segment. The Cytoplasmic portion of the chain corresponds to 233–274 (SYVLDLQESYMLDSAKRRDEPEKRRSYIIDVKKGRMRIRLKV). The helical transmembrane segment at 275-295 (ALALGVVVLCIAVGVGIMHFI) threads the bilayer. The segment at residues 302–321 (DSFYLSVMSVTTVGYGDRAF) is an intramembrane region (pore-forming). Residues 328-348 (LFAAIWLLVSTLAVARAFLYL) traverse the membrane as a helical segment. Residues 349-436 (AEARVDKRNR…LDLLEGGSGD (88 aa)) are Cytoplasmic-facing. 2 EF-hand domains span residues 365–400 (LCET…EMEK) and 404–436 (KDIL…GSGD). Ca(2+)-binding residues include Asp-378, Asp-380, Asn-382, Cys-384, Glu-389, Asp-417, Asn-421, Lys-423, and Asp-428.

Belongs to the two pore domain potassium channel (TC 1.A.1.7) family. As to quaternary structure, homodimer. Expressed in roots, cotyledons, stems, hypocotyls, leaves and flowers. Detected in root tips and in mesophyll cells and guard cells of the leaves.

It is found in the vacuole membrane. The protein resides in the plastid. The protein localises to the chloroplast thylakoid membrane. With respect to regulation, inhibited by barium, but not by tetraethylammonium. Its function is as follows. Two-pore potassium channel modulating the proton motive force (pmf) necessary to convert photochemical energy into physiological functions. Mediates the potassium efflux from the thylakoid lumen required for the regulation of the transmembrane electrical potential, the enhancement of the pH gradient for ATP synthesis, the regulation of electron flow, and pH-mediated photoprotective responses. Requires calcium for channel activity. This chain is Two-pore potassium channel 3, found in Arabidopsis thaliana (Mouse-ear cress).